Reading from the N-terminus, the 134-residue chain is Natriuretic peptides B (134 aa).

The first 26 residues, 1-26 (MDPQTAPSRALLLLLFLHLAFLGGRS), serve as a signal peptide directing secretion. O-linked (Xyl...) (chondroitin sulfate) serine glycosylation is present at Ser41. Residue Thr62 is glycosylated (O-linked (HexNAc...) threonine; Partial). Ser63 and Ser70 each carry an O-linked (HexNAc...) serine glycan. A glycan (O-linked (HexNAc...) threonine) is linked at Thr74. O-linked (HexNAc...) serine glycosylation occurs at Ser79. A glycan (O-linked (HexNAc...) threonine; Partial) is linked at Thr84. An O-linked (HexNAc...) threonine glycan is attached at Thr97. A disulfide bridge links Cys112 with Cys128.

This sequence belongs to the natriuretic peptide family. In terms of processing, the precursor molecule is proteolytically cleaved by the endoproteases FURIN or CORIN at Arg-102 to produce brain natriuretic peptide 32 and NT-proBNP. This likely occurs after it has been secreted into the blood, either during circulation or in the target cells. CORIN also cleaves the precursor molecule at additional residues including Arg-99 and possibly Lys-105. In patients with heart failure, processing and degradation of natriuretic peptides B occurs but is delayed, possibly due to a decrease in enzyme level or activity of CORIN and DPP4. Undergoes further proteolytic cleavage by various proteases such as DPP4, MME and possibly FAP, to give rise to a variety of shorter peptides. Cleaved at Pro-104 by the prolyl endopeptidase FAP (seprase) activity (in vitro). Degraded by IDE. During IDE degradation, the resulting products initially increase the activation of NPR1 and can also stimulate NPR2 to produce cGMP before the fragments are completely degraded and inactivated by IDE (in vitro). Post-translationally, O-glycosylated on at least seven residues. In cardiomyocytes, glycosylation at Thr-97 is essential for the stability and processing of the extracellular natriuretic peptides B. Glycosylation, especially at Thr-97, may also be important for brain natriuretic peptide 32 stability and/or extracellular distribution. Glycosylation at Thr-97 appears to inhibit FURIN- or CORIN-mediated proteolytic processing, at least in HEK293 cells. Detected in the cardiac atria (at protein level). Detected in the kidney distal tubular cells (at protein level).

It localises to the secreted. Its function is as follows. Cardiac hormone that plays a key role in mediating cardio-renal homeostasis. May also function as a paracrine antifibrotic factor in the heart. Acts by specifically binding and stimulating NPR1 to produce cGMP, which in turn activates effector proteins that drive various biological responses. Involved in regulating the extracellular fluid volume and maintaining the fluid-electrolyte balance through natriuresis, diuresis, vasorelaxation, and inhibition of renin and aldosterone secretion. Binds the clearance receptor NPR3. In terms of biological role, may affect cardio-renal homeostasis. Able to promote the production of cGMP although its potency is very low compared to brain natriuretic peptide 32. May have a role in cardio-renal homeostasis. Able to promote the production of cGMP. The chain is Natriuretic peptides B (NPPB) from Homo sapiens (Human).